Here is a 117-residue protein sequence, read N- to C-terminus: Large ribosomal subunit protein bL20c (117 aa).

It belongs to the bacterial ribosomal protein bL20 family.

The protein resides in the plastid. It localises to the chloroplast. Binds directly to 23S ribosomal RNA and is necessary for the in vitro assembly process of the 50S ribosomal subunit. It is not involved in the protein synthesizing functions of that subunit. The chain is Large ribosomal subunit protein bL20c from Aethionema grandiflorum (Persian stone-cress).